Reading from the N-terminus, the 336-residue chain is Uridine nucleosidase 1 (336 aa).

Catalysis depends on residues D29 and H260.

Belongs to the IUNH family. Homodimer. Component of the NSH heterocomplex made of URH1/NSH1 and URH2/NSH2 which exhibits strong xanthosine nucleosidase activity. Interacts with URH2. Expressed ubiquitously in leaves, flowers, stems, pollen cells, root tip meristem and root vasculature.

Its subcellular location is the cytoplasm. It carries out the reaction uridine + H2O = D-ribose + uracil. It catalyses the reaction xanthosine + H2O = D-ribose + xanthine. The catalysed reaction is inosine + H2O = hypoxanthine + D-ribose. The enzyme catalyses adenosine + H2O = D-ribose + adenine. Its function is as follows. Involved in purine and pyrimidine breakdown rather than in pyrimidine salvage, especially in response to dark stress. Together with URH2, required for efficient inosine and xanthosine hydrolytic activities. Unable to use cytidine as a substrate. Can use uridine, inosine, adenosine as well as the cytokinin derivative isopentenyladenine-riboside as substrates. Also hydrolyzes xanthosine with high efficiency. The chain is Uridine nucleosidase 1 from Arabidopsis thaliana (Mouse-ear cress).